Consider the following 181-residue polypeptide: Acireductone dioxygenase 2 (181 aa).

Residues His97, His99, Glu103, and His141 each coordinate Fe(2+). His97, His99, Glu103, and His141 together coordinate Ni(2+).

This sequence belongs to the acireductone dioxygenase (ARD) family. Monomer. Requires Fe(2+) as cofactor. It depends on Ni(2+) as a cofactor.

It carries out the reaction 1,2-dihydroxy-5-(methylsulfanyl)pent-1-en-3-one + O2 = 3-(methylsulfanyl)propanoate + CO + formate + 2 H(+). The enzyme catalyses 1,2-dihydroxy-5-(methylsulfanyl)pent-1-en-3-one + O2 = 4-methylsulfanyl-2-oxobutanoate + formate + 2 H(+). Its pathway is amino-acid biosynthesis; L-methionine biosynthesis via salvage pathway; L-methionine from S-methyl-5-thio-alpha-D-ribose 1-phosphate: step 5/6. Catalyzes 2 different reactions between oxygen and the acireductone 1,2-dihydroxy-3-keto-5-methylthiopentene (DHK-MTPene) depending upon the metal bound in the active site. Fe-containing acireductone dioxygenase (Fe-ARD) produces formate and 2-keto-4-methylthiobutyrate (KMTB), the alpha-ketoacid precursor of methionine in the methionine recycle pathway. Ni-containing acireductone dioxygenase (Ni-ARD) produces methylthiopropionate, carbon monoxide and formate, and does not lie on the methionine recycle pathway. In Pectobacterium atrosepticum (strain SCRI 1043 / ATCC BAA-672) (Erwinia carotovora subsp. atroseptica), this protein is Acireductone dioxygenase 2.